The chain runs to 148 residues: Arginine repressor (148 aa).

It belongs to the ArgR family.

It localises to the cytoplasm. It functions in the pathway amino-acid biosynthesis; L-arginine biosynthesis [regulation]. Functionally, regulates arginine biosynthesis genes. The sequence is that of Arginine repressor from Chlorobium phaeovibrioides (strain DSM 265 / 1930) (Prosthecochloris vibrioformis (strain DSM 265)).